The sequence spans 407 residues: Multifunctional CCA protein (407 aa).

Positions 8 and 11 each coordinate ATP. 2 residues coordinate CTP: glycine 8 and arginine 11. Residues aspartate 21 and aspartate 23 each coordinate Mg(2+). 3 residues coordinate ATP: arginine 91, arginine 137, and arginine 140. CTP is bound by residues arginine 91, arginine 137, and arginine 140. Positions 228–329 (TGIHTLMVAQ…IKIFDKMDVW (102 aa)) constitute an HD domain.

It belongs to the tRNA nucleotidyltransferase/poly(A) polymerase family. Bacterial CCA-adding enzyme type 1 subfamily. Monomer. Can also form homodimers and oligomers. Requires Mg(2+) as cofactor. Ni(2+) is required as a cofactor.

The enzyme catalyses a tRNA precursor + 2 CTP + ATP = a tRNA with a 3' CCA end + 3 diphosphate. It carries out the reaction a tRNA with a 3' CCA end + 2 CTP + ATP = a tRNA with a 3' CCACCA end + 3 diphosphate. Functionally, catalyzes the addition and repair of the essential 3'-terminal CCA sequence in tRNAs without using a nucleic acid template. Adds these three nucleotides in the order of C, C, and A to the tRNA nucleotide-73, using CTP and ATP as substrates and producing inorganic pyrophosphate. tRNA 3'-terminal CCA addition is required both for tRNA processing and repair. Also involved in tRNA surveillance by mediating tandem CCA addition to generate a CCACCA at the 3' terminus of unstable tRNAs. While stable tRNAs receive only 3'-terminal CCA, unstable tRNAs are marked with CCACCA and rapidly degraded. This Aliivibrio fischeri (strain ATCC 700601 / ES114) (Vibrio fischeri) protein is Multifunctional CCA protein.